The primary structure comprises 120 residues: C-C motif chemokine 27 (120 aa).

A signal peptide spans 1 to 25; it reads MMEGLSPASSLPLLLLLLSPAPEAA. 2 disulfides stabilise this stretch: Cys34–Cys63 and Cys35–Cys78.

This sequence belongs to the intercrine beta (chemokine CC) family. Monomer, dimer, and tetramer. Heparin avidly promotes oligomerization. Interacts with TNFAIP6 (via Link domain). In terms of tissue distribution, isoform 1 is predominantly expressed in placenta and weakly in skin. Isoform 2 is predominantly expressed in testes and brain, weakly in kidney and liver and even lower in heart and muscle. Low expression of both isoforms in other tissues.

It is found in the secreted. The protein resides in the nucleus. Functionally, chemotactic factor that attracts skin-associated memory T-lymphocytes. May play a role in mediating homing of lymphocytes to cutaneous sites. May play a role in cell migration during embryogenesis. Nuclear forms may facilitate cellular migration by inducing cytoskeletal relaxation. Binds to CCR10. The polypeptide is C-C motif chemokine 27 (Ccl27) (Mus musculus (Mouse)).